A 795-amino-acid chain; its full sequence is Phenylalanine--tRNA ligase beta subunit (795 aa).

The tRNA-binding domain occupies 39 to 148 (AGSFHGVVVG…ADAPIGTDIR (110 aa)). The region spanning 401–476 (PKRATITLRR…RVYGYNNIPD (76 aa)) is the B5 domain. The Mg(2+) site is built by Asp-454, Asp-460, Glu-463, and Glu-464. The region spanning 701-794 (SRFPANRRDI…LKERFQASLR (94 aa)) is the FDX-ACB domain.

This sequence belongs to the phenylalanyl-tRNA synthetase beta subunit family. Type 1 subfamily. As to quaternary structure, tetramer of two alpha and two beta subunits. Mg(2+) serves as cofactor.

It is found in the cytoplasm. The catalysed reaction is tRNA(Phe) + L-phenylalanine + ATP = L-phenylalanyl-tRNA(Phe) + AMP + diphosphate + H(+). The polypeptide is Phenylalanine--tRNA ligase beta subunit (pheT) (Escherichia coli (strain K12)).